Consider the following 115-residue polypeptide: Large ribosomal subunit protein bL19 (115 aa).

The protein belongs to the bacterial ribosomal protein bL19 family.

Functionally, this protein is located at the 30S-50S ribosomal subunit interface and may play a role in the structure and function of the aminoacyl-tRNA binding site. This chain is Large ribosomal subunit protein bL19, found in Brevibacillus brevis (strain 47 / JCM 6285 / NBRC 100599).